A 388-amino-acid polypeptide reads, in one-letter code: Putative [LysW]-aminoadipate semialdehyde/glutamate semialdehyde transaminase (388 aa).

Residues 100 to 101 (GT) and Phe127 each bind pyridoxal 5'-phosphate. Arg130 contacts substrate. 211 to 214 (DEIQ) contributes to the pyridoxal 5'-phosphate binding site. Lys240 carries the post-translational modification N6-(pyridoxal phosphate)lysine. Position 268 (Ser268) interacts with substrate. Thr269 is a binding site for pyridoxal 5'-phosphate.

It belongs to the class-III pyridoxal-phosphate-dependent aminotransferase family. LysJ subfamily. In terms of assembly, homodimer. The cofactor is pyridoxal 5'-phosphate.

It is found in the cytoplasm. It carries out the reaction [amino-group carrier protein]-C-terminal-gamma-(L-lysyl)-L-glutamate + 2-oxoglutarate = [amino-group carrier protein]-C-terminal-N-(1-carboxy-5-oxopentan-1-yl)-L-glutamine + L-glutamate. The enzyme catalyses [amino-group carrier protein]-C-terminal-gamma-(L-ornithyl)-L-glutamate + 2-oxoglutarate = [amino-group carrier protein]-C-terminal-gamma-(L-glutamyl-5-semialdehyde)-L-glutamate + L-glutamate. It functions in the pathway amino-acid biosynthesis; L-lysine biosynthesis via AAA pathway; L-lysine from L-alpha-aminoadipate (Thermus route): step 4/5. It participates in amino-acid biosynthesis; L-arginine biosynthesis. Functionally, involved in both the arginine and lysine biosynthetic pathways. In Aeropyrum pernix (strain ATCC 700893 / DSM 11879 / JCM 9820 / NBRC 100138 / K1), this protein is Putative [LysW]-aminoadipate semialdehyde/glutamate semialdehyde transaminase.